Here is a 77-residue protein sequence, read N- to C-terminus: Acyl carrier protein (77 aa).

One can recognise a Carrier domain in the interval 1 to 76 (MAVFEDVRDV…DVVNYIEKLG (76 aa)). O-(pantetheine 4'-phosphoryl)serine is present on serine 36.

It belongs to the acyl carrier protein (ACP) family. Post-translationally, 4'-phosphopantetheine is transferred from CoA to a specific serine of apo-ACP by AcpS. This modification is essential for activity because fatty acids are bound in thioester linkage to the sulfhydryl of the prosthetic group.

It localises to the cytoplasm. The protein operates within lipid metabolism; fatty acid biosynthesis. Carrier of the growing fatty acid chain in fatty acid biosynthesis. In Campylobacter concisus (strain 13826), this protein is Acyl carrier protein.